Here is a 311-residue protein sequence, read N- to C-terminus: 4-hydroxy-3-methylbut-2-enyl diphosphate reductase (311 aa).

Cys12 contacts [4Fe-4S] cluster. Residues His41 and His74 each contribute to the (2E)-4-hydroxy-3-methylbut-2-enyl diphosphate site. Residues His41 and His74 each coordinate dimethylallyl diphosphate. The isopentenyl diphosphate site is built by His41 and His74. A [4Fe-4S] cluster-binding site is contributed by Cys96. Position 124 (His124) interacts with (2E)-4-hydroxy-3-methylbut-2-enyl diphosphate. Residue His124 coordinates dimethylallyl diphosphate. His124 serves as a coordination point for isopentenyl diphosphate. Glu126 serves as the catalytic Proton donor. Thr168 contributes to the (2E)-4-hydroxy-3-methylbut-2-enyl diphosphate binding site. Cys198 serves as a coordination point for [4Fe-4S] cluster. Positions 226, 227, 228, and 270 each coordinate (2E)-4-hydroxy-3-methylbut-2-enyl diphosphate. Residues Ser226, Ser227, Asn228, and Ser270 each contribute to the dimethylallyl diphosphate site. Isopentenyl diphosphate contacts are provided by Ser226, Ser227, Asn228, and Ser270.

This sequence belongs to the IspH family. It depends on [4Fe-4S] cluster as a cofactor.

It carries out the reaction isopentenyl diphosphate + 2 oxidized [2Fe-2S]-[ferredoxin] + H2O = (2E)-4-hydroxy-3-methylbut-2-enyl diphosphate + 2 reduced [2Fe-2S]-[ferredoxin] + 2 H(+). The enzyme catalyses dimethylallyl diphosphate + 2 oxidized [2Fe-2S]-[ferredoxin] + H2O = (2E)-4-hydroxy-3-methylbut-2-enyl diphosphate + 2 reduced [2Fe-2S]-[ferredoxin] + 2 H(+). The protein operates within isoprenoid biosynthesis; dimethylallyl diphosphate biosynthesis; dimethylallyl diphosphate from (2E)-4-hydroxy-3-methylbutenyl diphosphate: step 1/1. It functions in the pathway isoprenoid biosynthesis; isopentenyl diphosphate biosynthesis via DXP pathway; isopentenyl diphosphate from 1-deoxy-D-xylulose 5-phosphate: step 6/6. Catalyzes the conversion of 1-hydroxy-2-methyl-2-(E)-butenyl 4-diphosphate (HMBPP) into a mixture of isopentenyl diphosphate (IPP) and dimethylallyl diphosphate (DMAPP). Acts in the terminal step of the DOXP/MEP pathway for isoprenoid precursor biosynthesis. This chain is 4-hydroxy-3-methylbut-2-enyl diphosphate reductase, found in Saccharophagus degradans (strain 2-40 / ATCC 43961 / DSM 17024).